The sequence spans 148 residues: uncharacterized protein (148 aa).

The interval lysine 55 to proline 148 is disordered. Polar residues predominate over residues arginine 68–glutamate 104.

This is an uncharacterized protein from Homo sapiens (Human).